A 377-amino-acid polypeptide reads, in one-letter code: Histone deacetylase 8 (377 aa).

A histone deacetylase region spans residues 5–336; that stretch reads RVDVFWHEGM…LHAMLEGVLK (332 aa). The active-site Proton donor/acceptor is the His-145. Zn(2+)-binding residues include Asp-182, His-184, and Asp-274.

It belongs to the histone deacetylase family. The cofactor is Zn(2+). As to expression, expressed in stems, leaves, flowers, siliques and mature seeds.

It localises to the nucleus. The protein resides in the cytoplasm. The enzyme catalyses N(6)-acetyl-L-lysyl-[histone] + H2O = L-lysyl-[histone] + acetate. Functionally, responsible for the deacetylation of lysine residues on the N-terminal part of the core histones (H2A, H2B, H3 and H4). Histone deacetylation gives a tag for epigenetic repression and plays an important role in transcriptional regulation, cell cycle progression and developmental events. Histone deacetylases act via the formation of large multiprotein complexes. This chain is Histone deacetylase 8, found in Arabidopsis thaliana (Mouse-ear cress).